We begin with the raw amino-acid sequence, 327 residues long: Ferrochelatase 2 (327 aa).

Residues His-201 and Glu-282 each contribute to the Fe cation site.

Belongs to the ferrochelatase family.

The protein localises to the cytoplasm. The enzyme catalyses heme b + 2 H(+) = protoporphyrin IX + Fe(2+). It participates in porphyrin-containing compound metabolism; protoheme biosynthesis; protoheme from protoporphyrin-IX: step 1/1. Functionally, catalyzes the ferrous insertion into protoporphyrin IX. The chain is Ferrochelatase 2 from Shewanella oneidensis (strain ATCC 700550 / JCM 31522 / CIP 106686 / LMG 19005 / NCIMB 14063 / MR-1).